The primary structure comprises 364 residues: UDP-N-acetylglucosamine--N-acetylmuramyl-(pentapeptide) pyrophosphoryl-undecaprenol N-acetylglucosamine transferase (364 aa).

Residues 10-12 (TGG), asparagine 128, arginine 170, serine 199, isoleucine 250, and glutamine 295 contribute to the UDP-N-acetyl-alpha-D-glucosamine site.

It belongs to the glycosyltransferase 28 family. MurG subfamily.

The protein resides in the cell inner membrane. It carries out the reaction di-trans,octa-cis-undecaprenyl diphospho-N-acetyl-alpha-D-muramoyl-L-alanyl-D-glutamyl-meso-2,6-diaminopimeloyl-D-alanyl-D-alanine + UDP-N-acetyl-alpha-D-glucosamine = di-trans,octa-cis-undecaprenyl diphospho-[N-acetyl-alpha-D-glucosaminyl-(1-&gt;4)]-N-acetyl-alpha-D-muramoyl-L-alanyl-D-glutamyl-meso-2,6-diaminopimeloyl-D-alanyl-D-alanine + UDP + H(+). It participates in cell wall biogenesis; peptidoglycan biosynthesis. Its function is as follows. Cell wall formation. Catalyzes the transfer of a GlcNAc subunit on undecaprenyl-pyrophosphoryl-MurNAc-pentapeptide (lipid intermediate I) to form undecaprenyl-pyrophosphoryl-MurNAc-(pentapeptide)GlcNAc (lipid intermediate II). In Chlorobium phaeobacteroides (strain DSM 266 / SMG 266 / 2430), this protein is UDP-N-acetylglucosamine--N-acetylmuramyl-(pentapeptide) pyrophosphoryl-undecaprenol N-acetylglucosamine transferase.